The sequence spans 314 residues: MSRPRRRGRDVHGVLLLDKPQGLSSNDALQKVKRIYNANRAGHTGALDPLATGMLPICLGEATKFSQYLLDSDKRYRVIARLGQRTDTSDADGTVVEERPVTFSEQQLQDALESFRGDTLQVPTMFSALKYQGKPLYEYARQGIEVPREARPITVYELLFIRHEGDELELEVHCSKGTYIRTIIDDLGEKLGCGAHVIYLRRLTVSKYPVERMVTLEQLNALLEEAQTRDIAPSELLDPLLMPMDSPAADYPVVNLPLTSSVYFKNGNPVRTTGAPSEGLVRVTEGEAQKFLGMGEIDSEGRVAPRRLVVEYPV.

His-43 lines the substrate pocket. Asp-48 functions as the Nucleophile in the catalytic mechanism. Substrate-binding residues include Tyr-76, Tyr-179, and Leu-200.

This sequence belongs to the pseudouridine synthase TruB family. Type 1 subfamily.

It carries out the reaction uridine(55) in tRNA = pseudouridine(55) in tRNA. Its function is as follows. Responsible for synthesis of pseudouridine from uracil-55 in the psi GC loop of transfer RNAs. This Cronobacter sakazakii (strain ATCC BAA-894) (Enterobacter sakazakii) protein is tRNA pseudouridine synthase B.